The following is a 446-amino-acid chain: tRNA modification GTPase MnmE (446 aa).

3 residues coordinate (6S)-5-formyl-5,6,7,8-tetrahydrofolate: arginine 24, glutamate 81, and lysine 120. The TrmE-type G domain occupies 216–368 (GLHAVLIGPP…LHIRLRELAL (153 aa)). Asparagine 226 contributes to the K(+) binding site. Residues 226–231 (NAGKSS), 245–251 (TDVAGTT), and 270–273 (DTAG) each bind GTP. Residue serine 230 coordinates Mg(2+). The K(+) site is built by threonine 245, valine 247, and threonine 250. Mg(2+) is bound at residue threonine 251. Position 446 (lysine 446) interacts with (6S)-5-formyl-5,6,7,8-tetrahydrofolate.

Belongs to the TRAFAC class TrmE-Era-EngA-EngB-Septin-like GTPase superfamily. TrmE GTPase family. As to quaternary structure, homodimer. Heterotetramer of two MnmE and two MnmG subunits. K(+) serves as cofactor.

It localises to the cytoplasm. Its function is as follows. Exhibits a very high intrinsic GTPase hydrolysis rate. Involved in the addition of a carboxymethylaminomethyl (cmnm) group at the wobble position (U34) of certain tRNAs, forming tRNA-cmnm(5)s(2)U34. This is tRNA modification GTPase MnmE from Xanthomonas oryzae pv. oryzae (strain PXO99A).